The primary structure comprises 292 residues: ATP synthase gamma chain (292 aa).

It belongs to the ATPase gamma chain family. F-type ATPases have 2 components, CF(1) - the catalytic core - and CF(0) - the membrane proton channel. CF(1) has five subunits: alpha(3), beta(3), gamma(1), delta(1), epsilon(1). CF(0) has three main subunits: a, b and c.

It is found in the cell inner membrane. In terms of biological role, produces ATP from ADP in the presence of a proton gradient across the membrane. The gamma chain is believed to be important in regulating ATPase activity and the flow of protons through the CF(0) complex. This is ATP synthase gamma chain from Hydrogenobaculum sp. (strain Y04AAS1).